Here is a 412-residue protein sequence, read N- to C-terminus: Poly-beta-1,6-N-acetyl-D-glucosamine synthase (412 aa).

The next 4 membrane-spanning stretches (helical) occupy residues phenylalanine 6–threonine 28, leucine 290–glycine 312, isoleucine 332–isoleucine 354, and leucine 366–phenylalanine 388.

It belongs to the glycosyltransferase 2 family.

It is found in the cell membrane. Its function is as follows. N-acetylglucosaminyltransferase that catalyzes the polymerization of single monomer units of UDP-N-acetylglucosamine to produce the linear homomer poly-beta-1,6-N-acetyl-D-glucosamine (PNAG, also referred to as PIA), a biofilm adhesin polysaccharide. Requires IcaD for full activity. This is Poly-beta-1,6-N-acetyl-D-glucosamine synthase (icaA) from Staphylococcus aureus (strain MSSA476).